We begin with the raw amino-acid sequence, 416 residues long: PDZ and LIM domain protein 7 (416 aa).

The 85-residue stretch at 1–85 folds into the PDZ domain; that stretch reads MESYKVMLNG…RLCLTLSRAQ (85 aa). Disordered regions lie at residues 145-191 and 202-221; these read CTPQ…AVDP and TSTV…MQNR. The span at 168–181 shows a compositional bias: low complexity; that stretch reads PGLAPRTPAATPGP. LIM zinc-binding domains follow at residues 239–297, 298–357, and 358–416; these read PLCY…TRYA, PSCA…MFGT, and KCRG…FSHV.

In terms of assembly, interacts with various PKC isoforms through the LIM zinc-binding domains. Interacts with TPM2. Interacts with TBX4 and TBX5.

The protein localises to the cytoplasm. It is found in the cytoskeleton. Its subcellular location is the myofibril. The protein resides in the sarcomere. It localises to the z line. May function as a scaffold on which the coordinated assembly of proteins can occur. May play a role as an adapter that, via its PDZ domain, localizes LIM-binding proteins to actin filaments of both skeletal muscle and nonmuscle tissues. May be involved in bone formation. The protein is PDZ and LIM domain protein 7 (PDLIM7) of Gallus gallus (Chicken).